Reading from the N-terminus, the 185-residue chain is PXMP2/4 family protein 4 (185 aa).

3 consecutive transmembrane segments (helical) span residues 63–83, 100–120, and 141–161; these read MAVF…KYLD, IDQV…MGIL, and VSDC…ISSI.

Belongs to the peroxisomal membrane protein PXMP2/4 family.

The protein resides in the membrane. The sequence is that of PXMP2/4 family protein 4 from Dictyostelium discoideum (Social amoeba).